Here is an 879-residue protein sequence, read N- to C-terminus: Pyruvate dehydrogenase phosphatase regulatory subunit, mitochondrial (879 aa).

The transit peptide at 1-27 (MMFYRLLSIVGRQRASPGWQNWSSARN) directs the protein to the mitochondrion.

This sequence belongs to the GcvT family. In terms of assembly, heterodimer of a catalytic (PDP1) and a regulatory (PDPR) subunit.

Its subcellular location is the mitochondrion matrix. Decreases the sensitivity of PDP1 to magnesium ions, and this inhibition is reversed by the polyamine spermine. This is Pyruvate dehydrogenase phosphatase regulatory subunit, mitochondrial (PDPR) from Homo sapiens (Human).